We begin with the raw amino-acid sequence, 310 residues long: Calbindin-32 (310 aa).

6 consecutive EF-hand domains span residues Leu-35 to Ser-70, Thr-84 to Phe-120, Glu-131 to Glu-166, Lys-177 to Phe-212, Leu-224 to Leu-259, and Thr-283 to Ile-304. Ca(2+) is bound by residues Asp-48, Asp-50, Asn-52, Tyr-54, Glu-59, Asp-98, Asn-100, Asp-102, Lys-104, Glu-109, Asp-144, Asp-146, Ser-148, Tyr-150, Glu-155, Asp-190, Asn-192, Asp-194, Arg-196, Glu-201, Asp-237, Asp-239, Ser-241, Thr-243, and Glu-248.

Belongs to the calbindin family. As to expression, expressed in a large number of neuron of the brain and the thoracic ganglion as well as in two small muscles of the thorax.

The sequence is that of Calbindin-32 (Cbp53E) from Drosophila melanogaster (Fruit fly).